The following is a 283-amino-acid chain: Polyamine aminopropyltransferase (283 aa).

The PABS domain occupies 2 to 237 (ELWYTEEHTD…GHWLFGFASK (236 aa)). S-methyl-5'-thioadenosine is bound at residue Gln31. Residues His62 and Asp86 each contribute to the spermidine site. Residues Glu106 and 137–138 (DG) each bind S-methyl-5'-thioadenosine. Catalysis depends on Asp155, which acts as the Proton acceptor. 155–158 (DSTD) contributes to the spermidine binding site. Pro162 lines the S-methyl-5'-thioadenosine pocket.

It belongs to the spermidine/spermine synthase family. As to quaternary structure, homodimer or homotetramer.

The protein localises to the cytoplasm. It catalyses the reaction S-adenosyl 3-(methylsulfanyl)propylamine + putrescine = S-methyl-5'-thioadenosine + spermidine + H(+). It functions in the pathway amine and polyamine biosynthesis; spermidine biosynthesis; spermidine from putrescine: step 1/1. Functionally, catalyzes the irreversible transfer of a propylamine group from the amino donor S-adenosylmethioninamine (decarboxy-AdoMet) to putrescine (1,4-diaminobutane) to yield spermidine. This is Polyamine aminopropyltransferase from Clostridium perfringens (strain ATCC 13124 / DSM 756 / JCM 1290 / NCIMB 6125 / NCTC 8237 / Type A).